A 550-amino-acid chain; its full sequence is Dihydroxy-acid dehydratase (550 aa).

A Mg(2+)-binding site is contributed by D78. C119 serves as a coordination point for [2Fe-2S] cluster. Residues D120 and K121 each contribute to the Mg(2+) site. At K121 the chain carries N6-carboxylysine. C191 contributes to the [2Fe-2S] cluster binding site. E440 serves as a coordination point for Mg(2+). S466 functions as the Proton acceptor in the catalytic mechanism.

This sequence belongs to the IlvD/Edd family. Homodimer. [2Fe-2S] cluster serves as cofactor. Mg(2+) is required as a cofactor.

It catalyses the reaction (2R)-2,3-dihydroxy-3-methylbutanoate = 3-methyl-2-oxobutanoate + H2O. The catalysed reaction is (2R,3R)-2,3-dihydroxy-3-methylpentanoate = (S)-3-methyl-2-oxopentanoate + H2O. The protein operates within amino-acid biosynthesis; L-isoleucine biosynthesis; L-isoleucine from 2-oxobutanoate: step 3/4. It participates in amino-acid biosynthesis; L-valine biosynthesis; L-valine from pyruvate: step 3/4. Functionally, functions in the biosynthesis of branched-chain amino acids. Catalyzes the dehydration of (2R,3R)-2,3-dihydroxy-3-methylpentanoate (2,3-dihydroxy-3-methylvalerate) into 2-oxo-3-methylpentanoate (2-oxo-3-methylvalerate) and of (2R)-2,3-dihydroxy-3-methylbutanoate (2,3-dihydroxyisovalerate) into 2-oxo-3-methylbutanoate (2-oxoisovalerate), the penultimate precursor to L-isoleucine and L-valine, respectively. In Methanococcus aeolicus (strain ATCC BAA-1280 / DSM 17508 / OCM 812 / Nankai-3), this protein is Dihydroxy-acid dehydratase.